Here is a 402-residue protein sequence, read N- to C-terminus: Deoxyguanosinetriphosphate triphosphohydrolase-like protein (402 aa).

Residues 20–39 (PAFSRGRLVPEPESPTRTPF) form a disordered region. In terms of domain architecture, HD spans 73–217 (RLTHTIEVAQ…AAIADDIAYN (145 aa)).

This sequence belongs to the dGTPase family. Type 2 subfamily.

This chain is Deoxyguanosinetriphosphate triphosphohydrolase-like protein, found in Brucella canis (strain ATCC 23365 / NCTC 10854 / RM-666).